The following is a 123-amino-acid chain: MGIKYSNKINKIRTFALSLVFIGLLIAYLGVFFRENIIIMTTFMMLGFLAVLASTFVYFWIGMLSTKTVQIVCPSCNKPTKMLGRVDVCMHCNQPLTLDSNLEGKEFDEKYNKKTIKHTNIYK.

Helical transmembrane passes span 12–32 (IRTFALSLVFIGLLIAYLGVF) and 43–63 (FMMLGFLAVLASTFVYFWIGM).

The protein belongs to the UPF0295 family.

The protein localises to the cell membrane. The sequence is that of UPF0295 protein Bcer98_0460 from Bacillus cytotoxicus (strain DSM 22905 / CIP 110041 / 391-98 / NVH 391-98).